The chain runs to 302 residues: tRNA pseudouridine synthase B (302 aa).

Asp47 serves as the catalytic Nucleophile.

This sequence belongs to the pseudouridine synthase TruB family. Type 1 subfamily.

It catalyses the reaction uridine(55) in tRNA = pseudouridine(55) in tRNA. Responsible for synthesis of pseudouridine from uracil-55 in the psi GC loop of transfer RNAs. In Ruegeria sp. (strain TM1040) (Silicibacter sp.), this protein is tRNA pseudouridine synthase B.